Reading from the N-terminus, the 776-residue chain is Protein SEY1 (776 aa).

Residues 1–681 (MADRSAIQLI…KRSIITTRTH (681 aa)) lie on the Cytoplasmic side of the membrane. The region spanning 34-263 (GLDYHVISVF…TENYYFKPQY (230 aa)) is the GB1/RHD3-type G domain. 44–51 (GSQSSGKS) serves as a coordination point for GTP. The chain crosses the membrane as a helical span at residues 682–702 (IPPWIYVLLAVLGWNEFVAVI). Residues 703–705 (RNP) lie on the Lumenal side of the membrane. A helical transmembrane segment spans residues 706-726 (LFVTLTLILGATFFVIHKFGL). Over 727 to 776 (WGPVVNVVQSAVGETRTAIKDKLRQFVVEDHEVKESFEMKDFSKNEQKEK) the chain is Cytoplasmic.

This sequence belongs to the TRAFAC class dynamin-like GTPase superfamily. GB1/RHD3 GTPase family. RHD3 subfamily. Interacts with RTN1 and YOP1; GTP binding is not required for these interactions.

The protein resides in the endoplasmic reticulum membrane. Cooperates with the reticulon proteins RTN1 and RTN2 and the tubule-shaping DP1 family protein YOP1 to generate and maintain the structure of the tubular endoplasmic reticulum network. Has GTPase activity, which is required for its function in ER organization. The polypeptide is Protein SEY1 (Saccharomyces cerevisiae (strain AWRI1631) (Baker's yeast)).